Reading from the N-terminus, the 82-residue chain is Small ribosomal subunit protein uS17 (82 aa).

Belongs to the universal ribosomal protein uS17 family. Part of the 30S ribosomal subunit.

One of the primary rRNA binding proteins, it binds specifically to the 5'-end of 16S ribosomal RNA. The protein is Small ribosomal subunit protein uS17 of Xanthobacter autotrophicus (strain ATCC BAA-1158 / Py2).